A 303-amino-acid chain; its full sequence is UDP-3-O-acyl-N-acetylglucosamine deacetylase (303 aa).

Zn(2+) is bound by residues His78, His237, and Asp241. The active-site Proton donor is His264.

It belongs to the LpxC family. The cofactor is Zn(2+).

The catalysed reaction is a UDP-3-O-[(3R)-3-hydroxyacyl]-N-acetyl-alpha-D-glucosamine + H2O = a UDP-3-O-[(3R)-3-hydroxyacyl]-alpha-D-glucosamine + acetate. It participates in glycolipid biosynthesis; lipid IV(A) biosynthesis; lipid IV(A) from (3R)-3-hydroxytetradecanoyl-[acyl-carrier-protein] and UDP-N-acetyl-alpha-D-glucosamine: step 2/6. Functionally, catalyzes the hydrolysis of UDP-3-O-myristoyl-N-acetylglucosamine to form UDP-3-O-myristoylglucosamine and acetate, the committed step in lipid A biosynthesis. In Pseudomonas entomophila (strain L48), this protein is UDP-3-O-acyl-N-acetylglucosamine deacetylase.